Here is a 253-residue protein sequence, read N- to C-terminus: Electron transfer flavoprotein subunit beta, mitochondrial (253 aa).

It belongs to the ETF beta-subunit/FixA family. In terms of assembly, heterodimer of an alpha and a beta subunit. FAD serves as cofactor. The cofactor is AMP.

The protein resides in the mitochondrion matrix. Its function is as follows. The electron transfer flavoprotein serves as a specific electron acceptor for several dehydrogenases, including five acyl-CoA dehydrogenases, glutaryl-CoA and sarcosine dehydrogenase. It transfers the electrons to the main mitochondrial respiratory chain via ETF-ubiquinone oxidoreductase (ETF dehydrogenase). This is Electron transfer flavoprotein subunit beta, mitochondrial (ETFB) from Oryza sativa subsp. indica (Rice).